Reading from the N-terminus, the 177-residue chain is uncharacterized protein (177 aa).

Residues 122-177 (LPFTRNGSGQQSNKLRDPKKGRTHKPKPSEKHKKNKTGKKGAQEKTHRSRSSRKGN) are disordered. Basic residues-rich tracts occupy residues 142–160 (GRTHKPKPSEKHKKNKTGK) and 168–177 (HRSRSSRKGN).

This is an uncharacterized protein from Saccharomyces cerevisiae (strain ATCC 204508 / S288c) (Baker's yeast).